The primary structure comprises 175 residues: Adenylate kinase isoenzyme 6 homolog (175 aa).

ATP is bound by residues glycine 18, glycine 20, lysine 21, threonine 22, and threonine 23. The segment at 38–61 (CIGDVVKENHLHFGFDEKWKTYDV) is NMPbind. The tract at residues 113-123 (SRGYSLEKIQE) is LID. Arginine 114 is an ATP binding site.

It belongs to the adenylate kinase family. AK6 subfamily. In terms of assembly, interacts with small ribosomal subunit protein uS11. Not a structural component of 43S pre-ribosomes, but transiently interacts with them by binding to uS11.

It localises to the cytoplasm. The protein resides in the nucleus. The enzyme catalyses AMP + ATP = 2 ADP. The catalysed reaction is ATP + H2O = ADP + phosphate + H(+). Broad-specificity nucleoside monophosphate (NMP) kinase that catalyzes the reversible transfer of the terminal phosphate group between nucleoside triphosphates and monophosphates. Also has ATPase activity. Involved in the late cytoplasmic maturation steps of the 40S ribosomal particles, specifically 18S rRNA maturation. While NMP activity is not required for ribosome maturation, ATPase activity is. Associates transiently with small ribosomal subunit protein uS11. ATP hydrolysis breaks the interaction with uS11. May temporarily remove uS11 from the ribosome to enable a conformational change of the ribosomal RNA that is needed for the final maturation step of the small ribosomal subunit. Its NMP activity may have a role in nuclear energy homeostasis. This chain is Adenylate kinase isoenzyme 6 homolog (fap7), found in Schizosaccharomyces pombe (strain 972 / ATCC 24843) (Fission yeast).